A 234-amino-acid chain; its full sequence is LexA repressor (234 aa).

Residues 41–61 constitute a DNA-binding region (H-T-H motif); that stretch reads RAEIANELGFKSANAAEEHLQ. Residues Ser-152 and Lys-189 each act as for autocatalytic cleavage activity in the active site.

It belongs to the peptidase S24 family. As to quaternary structure, homodimer.

The catalysed reaction is Hydrolysis of Ala-|-Gly bond in repressor LexA.. Represses a number of genes involved in the response to DNA damage (SOS response), including recA and lexA. In the presence of single-stranded DNA, RecA interacts with LexA causing an autocatalytic cleavage which disrupts the DNA-binding part of LexA, leading to derepression of the SOS regulon and eventually DNA repair. This Polaromonas sp. (strain JS666 / ATCC BAA-500) protein is LexA repressor.